Reading from the N-terminus, the 67-residue chain is AGAPVYLAAXXXYLTAEILXLAGNAARDNKKSRIIPRHVQLAVXXXXXLNKLLGNVTIAQGGVLPNI.

An N5-methylglutamine modification is found at Gln60.

Belongs to the histone H2A family. As to quaternary structure, the nucleosome is a histone octamer containing two molecules each of H2A, H2B, H3 and H4 assembled in one H3-H4 heterotetramer and two H2A-H2B heterodimers. The octamer wraps approximately 147 bp of DNA.

It localises to the nucleus. It is found in the chromosome. In terms of biological role, core component of nucleosome. Nucleosomes wrap and compact DNA into chromatin, limiting DNA accessibility to the cellular machineries which require DNA as a template. Histones thereby play a central role in transcription regulation, DNA repair, DNA replication and chromosomal stability. DNA accessibility is regulated via a complex set of post-translational modifications of histones, also called histone code, and nucleosome remodeling. This Olisthodiscus luteus (Marine phytoflagellate) protein is Histone H2A.